The following is a 273-amino-acid chain: Undecaprenyl-diphosphatase (273 aa).

7 helical membrane passes run 6-26 (SLLI…LPVS), 45-65 (AKTF…VMFW), 90-110 (LTLI…LLFH), 116-136 (LFNP…LIAA), 190-210 (YAAS…ATAL), 222-242 (GDIP…LIAI), and 252-272 (ISFI…YVVF).

The protein belongs to the UppP family.

The protein resides in the cell inner membrane. It carries out the reaction di-trans,octa-cis-undecaprenyl diphosphate + H2O = di-trans,octa-cis-undecaprenyl phosphate + phosphate + H(+). In terms of biological role, catalyzes the dephosphorylation of undecaprenyl diphosphate (UPP). Confers resistance to bacitracin. The polypeptide is Undecaprenyl-diphosphatase (Escherichia coli O7:K1 (strain IAI39 / ExPEC)).